Here is a 1611-residue protein sequence, read N- to C-terminus: DNA (cytosine-5)-methyltransferase 1 (1611 aa).

An interaction with DMAP1 region spans residues 1–120 (MPARTAPARV…SQTSGEDCRV (120 aa)). Residues 1-148 (MPARTAPARV…RRSKSDGETK (148 aa)) are interaction with DNMT3A. 2 interaction with the PRC2/EED-EZH2 complex regions span residues 1 to 334 (MPAR…TEKK) and 306 to 603 (KPQV…TIRQ). A Phosphoserine modification is found at S15. The 94-residue stretch at 16–109 (RAFSLPDDVR…SREANGCLEN (94 aa)) folds into the DMAP1-binding domain. An N6,N6-dimethyllysine; by EHMT2 modification is found at K70. Positions 123-328 (AEKGKPPKPV…EEKRRRTTYR (206 aa)) are disordered. The residue at position 133 (S133) is a Phosphoserine. T137 is subject to Phosphothreonine. S141 is modified (phosphoserine). An N6-methyllysine; by SETD7 modification is found at K142. Residue S143 is modified to Phosphoserine; by PKB/AKT1. An interaction with DNMT3B region spans residues 149-216 (SEVSSSPRIT…TSRERVAGLL (68 aa)). 2 positions are modified to phosphoserine: S152 and S154. K160 is modified (N6-acetyllysine). Positions 163–174 (RQTTITSHFPRG) are interaction with PCNA. Residues 163-174 (RQTTITSHFPRG) are compositionally biased toward low complexity. T166 carries the post-translational modification Phosphothreonine. A Nuclear localization signal motif is present at residues 177 to 204 (KRKPEEEPEKVKSDDSVDEEKDQEEKRR). Basic and acidic residues-rich tracts occupy residues 178-191 (RKPEEEPEKVKSDD), 199-212 (QEEKRRRVTSRERV), 220-265 (EPGR…RDVR), 279-311 (KDEKRHRSQPKDLASKRRPEEKEPERVKPQVSD), and 319-328 (EEKRRRTTYR). K188 is modified (N6-acetyllysine). An N6-acetyllysine; alternate modification is found at K257. A Glycyl lysine isopeptide (Lys-Gly) (interchain with G-Cter in SUMO2); alternate cross-link involves residue K257. Phosphoserine is present on S310. Positions 329–548 (ELTEKKMTRT…NLNRFTEDSL (220 aa)) are DNA replication foci-targeting sequence. Zn(2+) is bound by residues C351 and C354. 2 positions are modified to phosphoserine: S392 and S396. Residues C412 and H416 each coordinate Zn(2+). Phosphoserine is present on residues S507 and S547. The disordered stretch occupies residues 594–614 (RAERRQTIRQPAKEKDKGPTK). The segment at 643–689 (NAFKRRRCGVCEICQQPECGKCKACKDMVKFGGSGRSKQACQKRRCP) adopts a CXXC-type zinc-finger fold. Residues C650, C653, C656, C661, C664, C667, C683, and C688 each contribute to the Zn(2+) site. An autoinhibitory linker region spans residues 690–751 (NMAMKEADDD…SYYKKVCIDS (62 aa)). Positions 695–726 (EADDDEEVDDNIPEMPSPKKMHQGKKKKQNKN) are disordered. The segment covering 696 to 706 (ADDDEEVDDNI) has biased composition (acidic residues). The residue at position 711 (S711) is a Phosphoserine. Basic residues predominate over residues 713-725 (KKMHQGKKKKQNK). Phosphoserine is present on S729. K746 is modified (N6-acetyllysine). Positions 752 to 877 (ETLEVGDCVS…QDYARFESPP (126 aa)) constitute a BAH 1 domain. S875 carries the phosphoserine modification. Residues K888, K954, K958, K972, and K1051 each carry the N6-acetyllysine modification. In terms of domain architecture, BAH 2 spans 969–1097 (HYRKYSDYIK…AKSKSFEDPP (129 aa)). The tract at residues 1091–1126 (KSFEDPPNHARSTGNKGKGKGKGKNRTKSQTCEPSE) is disordered. 4 consecutive repeat copies span residues 1106 to 1107 (KG), 1108 to 1109 (KG), 1110 to 1111 (KG), and 1112 to 1113 (KG). A 5 X 2 AA tandem repeats of K-G region spans residues 1106-1115 (KGKGKGKGKN). A compositionally biased stretch (basic residues) spans 1107–1117 (GKGKGKGKNRT). An N6-acetyllysine mark is found at K1108, K1110, K1112, K1114, and K1118. The stretch at 1114–1115 (KN) is one 5; approximate repeat. Positions 1118 to 1611 (KSQTCEPSEL…AKIKEEAAKD (494 aa)) are interaction with the PRC2/EED-EZH2 complex. An SAM-dependent MTase C5-type domain is found at 1136–1595 (LRTLDVFSGC…LEIKRCMLAK (460 aa)). The catalytic stretch occupies residues 1136–1611 (LRTLDVFSGC…AKIKEEAAKD (476 aa)). S-adenosyl-L-methionine contacts are provided by residues S1143, 1147–1148 (GL), 1165–1166 (EM), 1187–1188 (DC), and C1188. C1223 is an active-site residue. K1346 and K1412 each carry N6-acetyllysine. Positions 1574 and 1576 each coordinate S-adenosyl-L-methionine. A Glycyl lysine isopeptide (Lys-Gly) (interchain with G-Cter in SUMO2) cross-link involves residue K1605.

It belongs to the class I-like SAM-binding methyltransferase superfamily. C5-methyltransferase family. As to quaternary structure, homodimer. Forms a stable complex with E2F1, BB1 and HDAC1. Forms a complex with DMAP1 and HDAC2, with direct interaction. Interacts with the PRC2/EED-EZH2 complex. Probably part of a corepressor complex containing ZNF304, TRIM28, SETDB1 and DNMT1. Interacts with UHRF1; promoting its recruitment to hemimethylated DNA. Interacts with USP7, promoting its deubiquitination. Interacts with PCNA. Interacts with MBD2 and MBD3. Interacts with DNMT3A and DNMT3B. Interacts with UBC9. Interacts with CSNK1D. Interacts with HDAC1. Interacts with BAZ2A/TIP5. Interacts with SIRT7. Interacts with ZNF263; recruited to the SIX3 promoter along with other proteins involved in chromatin modification and transcriptional corepression where it contributes to transcriptional repression. Interacts with L3MBTL3 and DCAF5; the interaction requires DNMT1 methylation at Lys-142 and is necessary to target DNMT1 for ubiquitination by the CRL4-DCAF5 E3 ubiquitin ligase complex and proteasomal degradation. Interacts with PHF20L1; the interaction requires DNMT1 methylation at Lys-142 and protects DNMT1 from ubiquitination and proteasomal degradation. Sumoylated; sumoylation increases activity. Post-translationally, acetylation on multiple lysines, mainly by KAT2B/PCAF, regulates cell cycle G(2)/M transition. Deacetylation of Lys-1346 and Lys-1412 by SIRT1 increases methyltransferase activity. In terms of processing, phosphorylation of Ser-154 by CDKs is important for enzymatic activity and protein stability. Phosphorylation of Ser-143 by AKT1 prevents methylation by SETD7 thereby increasing DNMT1 stability. Methylation at Lys-142 by SETD7 is necessary for the regulation of DNMT1 proteasomal degradation. Post-translationally, ubiquitinated by UHRF1; interaction with USP7 counteracts ubiquitination by UHRF1 by promoting deubiquitination and preventing degradation by the proteasome.

It is found in the nucleus. It carries out the reaction a 2'-deoxycytidine in DNA + S-adenosyl-L-methionine = a 5-methyl-2'-deoxycytidine in DNA + S-adenosyl-L-homocysteine + H(+). In terms of biological role, methylates CpG residues. Preferentially methylates hemimethylated DNA. Associates with DNA replication sites in S phase maintaining the methylation pattern in the newly synthesized strand, that is essential for epigenetic inheritance. Associates with chromatin during G2 and M phases to maintain DNA methylation independently of replication. It is responsible for maintaining methylation patterns established in development. DNA methylation is coordinated with methylation of histones. Mediates transcriptional repression by direct binding to HDAC2. In association with DNMT3B and via the recruitment of CTCFL/BORIS, involved in activation of BAG1 gene expression by modulating dimethylation of promoter histone H3 at H3K4 and H3K9. Probably forms a corepressor complex required for activated KRAS-mediated promoter hypermethylation and transcriptional silencing of tumor suppressor genes (TSGs) or other tumor-related genes in colorectal cancer (CRC) cells. Also required to maintain a transcriptionally repressive state of genes in undifferentiated embryonic stem cells (ESCs). Associates at promoter regions of tumor suppressor genes (TSGs) leading to their gene silencing. Promotes tumor growth. This chain is DNA (cytosine-5)-methyltransferase 1 (DNMT1), found in Bos taurus (Bovine).